Consider the following 440-residue polypeptide: Thymidine phosphorylase (440 aa).

This sequence belongs to the thymidine/pyrimidine-nucleoside phosphorylase family. Homodimer.

The catalysed reaction is thymidine + phosphate = 2-deoxy-alpha-D-ribose 1-phosphate + thymine. The protein operates within pyrimidine metabolism; dTMP biosynthesis via salvage pathway; dTMP from thymine: step 1/2. In terms of biological role, the enzymes which catalyze the reversible phosphorolysis of pyrimidine nucleosides are involved in the degradation of these compounds and in their utilization as carbon and energy sources, or in the rescue of pyrimidine bases for nucleotide synthesis. This is Thymidine phosphorylase from Salmonella heidelberg (strain SL476).